The following is a 269-amino-acid chain: NAD kinase (269 aa).

Asp-45 (proton acceptor) is an active-site residue. Residues 45-46 (DG), 122-123 (NE), Arg-149, Asp-151, and Ala-186 each bind NAD(+).

Belongs to the NAD kinase family. The cofactor is a divalent metal cation.

Its subcellular location is the cytoplasm. The enzyme catalyses NAD(+) + ATP = ADP + NADP(+) + H(+). In terms of biological role, involved in the regulation of the intracellular balance of NAD and NADP, and is a key enzyme in the biosynthesis of NADP. Catalyzes specifically the phosphorylation on 2'-hydroxyl of the adenosine moiety of NAD to yield NADP. The protein is NAD kinase of Staphylococcus saprophyticus subsp. saprophyticus (strain ATCC 15305 / DSM 20229 / NCIMB 8711 / NCTC 7292 / S-41).